The chain runs to 505 residues: Metalloprotease TIKI1 (505 aa).

The N-terminal stretch at 1-19 is a signal peptide; that stretch reads MSPWSWFLLQTLCLLPTGA. Residues 20–477 lie on the Extracellular side of the membrane; sequence ASRRGAPGTA…RRGHSHHSQM (458 aa). N220, N229, N278, and N336 each carry an N-linked (GlcNAc...) asparagine glycan. The disordered stretch occupies residues 389-428; it reads PEAVSSGHSTLPPLVSRPGSADTPSEAEQRFRKKRRRSQR. Residues 419–428 show a composition bias toward basic residues; that stretch reads FRKKRRRSQR. Residues 478-498 form a helical membrane-spanning segment; that stretch reads VASSACLSLWTPVFWVLVLAF. At 499 to 505 the chain is on the cytoplasmic side; that stretch reads QTETPLL.

This sequence belongs to the TIKI family. It depends on Mn(2+) as a cofactor. The cofactor is Co(2+).

It is found in the cell membrane. Its function is as follows. Metalloprotease that acts as a negative regulator of the Wnt signaling pathway by mediating the cleavage of the 8 N-terminal residues of a subset of Wnt proteins. Following cleavage, Wnt proteins become oxidized and form large disulfide-bond oligomers, leading to their inactivation. Able to cleave WNT3A, WNT5, but not WNT11. Required for head formation. The protein is Metalloprotease TIKI1 (TRABD2A) of Homo sapiens (Human).